Consider the following 143-residue polypeptide: MRVLVQRVTSAQVTVDGEVVGRIEPNPQGLVALVGVTHGDDDATARALADKLWRLRILDGERSAADLGAPILVVSQFTLYADTAKGRRPSWSAAAPGPVAEPLVDAFAATLRELGATVATGRFGAHMHVELTNDGPVTLLLES.

The short motif at 135-136 (GP) is the Gly-cisPro motif, important for rejection of L-amino acids element.

The protein belongs to the DTD family. Homodimer.

It localises to the cytoplasm. It carries out the reaction glycyl-tRNA(Ala) + H2O = tRNA(Ala) + glycine + H(+). The catalysed reaction is a D-aminoacyl-tRNA + H2O = a tRNA + a D-alpha-amino acid + H(+). Its function is as follows. An aminoacyl-tRNA editing enzyme that deacylates mischarged D-aminoacyl-tRNAs. Also deacylates mischarged glycyl-tRNA(Ala), protecting cells against glycine mischarging by AlaRS. Acts via tRNA-based rather than protein-based catalysis; rejects L-amino acids rather than detecting D-amino acids in the active site. By recycling D-aminoacyl-tRNA to D-amino acids and free tRNA molecules, this enzyme counteracts the toxicity associated with the formation of D-aminoacyl-tRNA entities in vivo and helps enforce protein L-homochirality. The protein is D-aminoacyl-tRNA deacylase of Nocardia farcinica (strain IFM 10152).